A 367-amino-acid polypeptide reads, in one-letter code: D-alanine--D-alanine ligase (367 aa).

Residues 150–357 (KKLLTAAGLP…YPTLLATMVE (208 aa)) form the ATP-grasp domain. An ATP-binding site is contributed by 178–233 (RERLGLPVFVKPSRGGSSIGVSRVTAWDALPAAIELARRHDPKVIVEAAIPGRELE). Residues D312, E324, and N326 each coordinate Mg(2+).

Belongs to the D-alanine--D-alanine ligase family. The cofactor is Mg(2+). Mn(2+) is required as a cofactor.

It localises to the cytoplasm. The enzyme catalyses 2 D-alanine + ATP = D-alanyl-D-alanine + ADP + phosphate + H(+). Its pathway is cell wall biogenesis; peptidoglycan biosynthesis. Cell wall formation. This is D-alanine--D-alanine ligase from Mycolicibacterium vanbaalenii (strain DSM 7251 / JCM 13017 / BCRC 16820 / KCTC 9966 / NRRL B-24157 / PYR-1) (Mycobacterium vanbaalenii).